A 153-amino-acid polypeptide reads, in one-letter code: Methylglyoxal synthase (153 aa).

In terms of domain architecture, MGS-like spans 6–153 (RTIAARKHIA…QRYLAERLPS (148 aa)). Substrate-binding positions include histidine 19, lysine 23, 45-48 (TGTT), and 65-66 (SG). The Proton donor/acceptor role is filled by aspartate 71. Histidine 98 is a binding site for substrate.

This sequence belongs to the methylglyoxal synthase family.

The enzyme catalyses dihydroxyacetone phosphate = methylglyoxal + phosphate. Its function is as follows. Catalyzes the formation of methylglyoxal from dihydroxyacetone phosphate. This Sodalis glossinidius (strain morsitans) protein is Methylglyoxal synthase.